A 23-amino-acid polypeptide reads, in one-letter code: Acidic phospholipase A2 Cvv-E6c (23 aa).

It depends on Ca(2+) as a cofactor. In terms of processing, contains 7 disulfide bonds. As to expression, expressed by the venom gland.

It localises to the secreted. It catalyses the reaction a 1,2-diacyl-sn-glycero-3-phosphocholine + H2O = a 1-acyl-sn-glycero-3-phosphocholine + a fatty acid + H(+). Functionally, snake venom phospholipase A2 (PLA2) that significantly inhibits ADP-induced platelet aggregation in platelet-rich plasma of human, rabbit and guinea pig. PLA2 catalyzes the calcium-dependent hydrolysis of the 2-acyl groups in 3-sn-phosphoglycerides. The sequence is that of Acidic phospholipase A2 Cvv-E6c from Crotalus viridis viridis (Prairie rattlesnake).